A 156-amino-acid chain; its full sequence is Crossover junction endodeoxyribonuclease RuvC (156 aa).

Active-site residues include Asp9, Glu69, and Asp141. The Mg(2+) site is built by Asp9, Glu69, and Asp141.

It belongs to the RuvC family. In terms of assembly, homodimer which binds Holliday junction (HJ) DNA. The HJ becomes 2-fold symmetrical on binding to RuvC with unstacked arms; it has a different conformation from HJ DNA in complex with RuvA. In the full resolvosome a probable DNA-RuvA(4)-RuvB(12)-RuvC(2) complex forms which resolves the HJ. Mg(2+) is required as a cofactor.

The protein resides in the cytoplasm. The catalysed reaction is Endonucleolytic cleavage at a junction such as a reciprocal single-stranded crossover between two homologous DNA duplexes (Holliday junction).. In terms of biological role, the RuvA-RuvB-RuvC complex processes Holliday junction (HJ) DNA during genetic recombination and DNA repair. Endonuclease that resolves HJ intermediates. Cleaves cruciform DNA by making single-stranded nicks across the HJ at symmetrical positions within the homologous arms, yielding a 5'-phosphate and a 3'-hydroxyl group; requires a central core of homology in the junction. The consensus cleavage sequence is 5'-(A/T)TT(C/G)-3'. Cleavage occurs on the 3'-side of the TT dinucleotide at the point of strand exchange. HJ branch migration catalyzed by RuvA-RuvB allows RuvC to scan DNA until it finds its consensus sequence, where it cleaves and resolves the cruciform DNA. This Acaryochloris marina (strain MBIC 11017) protein is Crossover junction endodeoxyribonuclease RuvC.